Consider the following 296-residue polypeptide: Phosphatidylglycerol--prolipoprotein diacylglyceryl transferase (296 aa).

Helical transmembrane passes span 28 to 48 (WYGLCFSLGILFASLLGIYLA), 72 to 92 (FALYSLLFIIPGSRIAYILFY), 110 to 130 (GGLASHGGMLGLILWALIFSW), and 139 to 159 (LTFLFLCDLCASVFGCAAFMI). Residue Arg-160 participates in a 1,2-diacyl-sn-glycero-3-phospho-(1'-sn-glycerol) binding. Helical transmembrane passes span 197-217 (VQLYEGMSYLLLSIILFFLSY), 226-246 (GWVTSLGLVGISLIRFFAEFF), and 263-283 (GQILSFPLFVFGLCLGIACFL).

Belongs to the Lgt family.

The protein localises to the cell inner membrane. The enzyme catalyses L-cysteinyl-[prolipoprotein] + a 1,2-diacyl-sn-glycero-3-phospho-(1'-sn-glycerol) = an S-1,2-diacyl-sn-glyceryl-L-cysteinyl-[prolipoprotein] + sn-glycerol 1-phosphate + H(+). It participates in protein modification; lipoprotein biosynthesis (diacylglyceryl transfer). Catalyzes the transfer of the diacylglyceryl group from phosphatidylglycerol to the sulfhydryl group of the N-terminal cysteine of a prolipoprotein, the first step in the formation of mature lipoproteins. This Chlamydia caviae (strain ATCC VR-813 / DSM 19441 / 03DC25 / GPIC) (Chlamydophila caviae) protein is Phosphatidylglycerol--prolipoprotein diacylglyceryl transferase.